Consider the following 276-residue polypeptide: NH(3)-dependent NAD(+) synthetase (276 aa).

Position 46–53 (46–53 (GISGGQDS)) interacts with ATP. Mg(2+) is bound at residue Asp-52. Arg-140 is a deamido-NAD(+) binding site. ATP is bound at residue Thr-160. Residue Glu-165 coordinates Mg(2+). Deamido-NAD(+)-binding residues include Lys-173 and Asp-180. Residues Lys-189 and Thr-211 each contribute to the ATP site. 260–261 (HK) provides a ligand contact to deamido-NAD(+).

Belongs to the NAD synthetase family. As to quaternary structure, homodimer.

It carries out the reaction deamido-NAD(+) + NH4(+) + ATP = AMP + diphosphate + NAD(+) + H(+). It participates in cofactor biosynthesis; NAD(+) biosynthesis; NAD(+) from deamido-NAD(+) (ammonia route): step 1/1. In terms of biological role, catalyzes the ATP-dependent amidation of deamido-NAD to form NAD. Uses ammonia as a nitrogen source. This chain is NH(3)-dependent NAD(+) synthetase, found in Citrobacter koseri (strain ATCC BAA-895 / CDC 4225-83 / SGSC4696).